Here is a 65-residue protein sequence, read N- to C-terminus: Prokaryotic ubiquitin-like protein Pup (65 aa).

The tract at residues 1–38 (MANAQQQVFGGGGGDDAENNDAPQQGSGTQQVNVTGTD) is disordered. The interval 21–59 (DAPQQGSGTQQVNVTGTDDLLDEIDGLLETNAEEFVRSY) is ARC ATPase binding. The span at 22–34 (APQQGSGTQQVNV) shows a compositional bias: polar residues. Glutamine 65 carries the post-translational modification Deamidated glutamine. Residue glutamine 65 forms an Isoglutamyl lysine isopeptide (Gln-Lys) (interchain with K-? in acceptor proteins) linkage.

This sequence belongs to the prokaryotic ubiquitin-like protein family. Strongly interacts with the proteasome-associated ATPase ARC through a hydrophobic interface; the interacting region of Pup lies in its C-terminal half. There is one Pup binding site per ARC hexamer ring. In terms of processing, is modified by deamidation of its C-terminal glutamine to glutamate by the deamidase Dop, a prerequisite to the subsequent pupylation process.

It participates in protein degradation; proteasomal Pup-dependent pathway. In terms of biological role, protein modifier that is covalently attached to lysine residues of substrate proteins, thereby targeting them for proteasomal degradation. The tagging system is termed pupylation. The chain is Prokaryotic ubiquitin-like protein Pup from Corynebacterium urealyticum (strain ATCC 43042 / DSM 7109).